The following is a 678-amino-acid chain: Methionine--tRNA ligase (678 aa).

A 'HIGH' region motif is present at residues 18–28; it reads PYANGPIHLGH. Residues cysteine 149, cysteine 152, cysteine 162, and cysteine 165 each coordinate Zn(2+). The 'KMSKS' region signature appears at 334–338; that stretch reads KMSKS. Lysine 337 lines the ATP pocket. Positions 577–678 constitute a tRNA-binding domain; the sequence is DFAKVDLRVA…SGATPGMRVM (102 aa).

The protein belongs to the class-I aminoacyl-tRNA synthetase family. MetG type 1 subfamily. As to quaternary structure, homodimer. Zn(2+) serves as cofactor.

It is found in the cytoplasm. It carries out the reaction tRNA(Met) + L-methionine + ATP = L-methionyl-tRNA(Met) + AMP + diphosphate. Is required not only for elongation of protein synthesis but also for the initiation of all mRNA translation through initiator tRNA(fMet) aminoacylation. This chain is Methionine--tRNA ligase, found in Marinobacter nauticus (strain ATCC 700491 / DSM 11845 / VT8) (Marinobacter aquaeolei).